The chain runs to 157 residues: ATP synthase subunit b (157 aa).

Residues Leu7–Leu29 traverse the membrane as a helical segment.

The protein belongs to the ATPase B chain family. As to quaternary structure, F-type ATPases have 2 components, F(1) - the catalytic core - and F(0) - the membrane proton channel. F(1) has five subunits: alpha(3), beta(3), gamma(1), delta(1), epsilon(1). F(0) has three main subunits: a(1), b(2) and c(10-14). The alpha and beta chains form an alternating ring which encloses part of the gamma chain. F(1) is attached to F(0) by a central stalk formed by the gamma and epsilon chains, while a peripheral stalk is formed by the delta and b chains.

It is found in the cell inner membrane. In terms of biological role, f(1)F(0) ATP synthase produces ATP from ADP in the presence of a proton or sodium gradient. F-type ATPases consist of two structural domains, F(1) containing the extramembraneous catalytic core and F(0) containing the membrane proton channel, linked together by a central stalk and a peripheral stalk. During catalysis, ATP synthesis in the catalytic domain of F(1) is coupled via a rotary mechanism of the central stalk subunits to proton translocation. Component of the F(0) channel, it forms part of the peripheral stalk, linking F(1) to F(0). This is ATP synthase subunit b from Nitrosomonas eutropha (strain DSM 101675 / C91 / Nm57).